Consider the following 391-residue polypeptide: Probable sugar efflux transporter (391 aa).

12 helical membrane-spanning segments follow: residues 16 to 36 (VFVF…PIAL), 51 to 71 (VGLM…PLML), 82 to 102 (LLFL…AWDF), 103 to 123 (WVLL…WSIT), 138 to 158 (QALG…LPLG), 170 to 190 (TFGM…RLLP), 210 to 230 (PLLV…FTTY), 247 to 267 (VATL…FLFG), 277 to 297 (FIAC…SFKH), 300 to 320 (WVIF…GISL), 338 to 358 (IFSG…SIVI), and 361 to 381 (LGLG…LFWF).

Belongs to the major facilitator superfamily. SotB (TC 2.A.1.2) family.

It localises to the cell inner membrane. Its function is as follows. Involved in the efflux of sugars. The physiological role may be the reduction of the intracellular concentration of toxic sugars or sugar metabolites. This Helicobacter acinonychis (strain Sheeba) protein is Probable sugar efflux transporter.